We begin with the raw amino-acid sequence, 310 residues long: Ribosomal RNA small subunit methyltransferase H (310 aa).

S-adenosyl-L-methionine-binding positions include Gly-47 to His-49, Asp-66, Phe-93, Asp-108, and Gln-115. Positions Arg-275–Pro-310 are disordered. Residues Arg-301–Pro-310 are compositionally biased toward basic and acidic residues.

The protein belongs to the methyltransferase superfamily. RsmH family.

It localises to the cytoplasm. The catalysed reaction is cytidine(1402) in 16S rRNA + S-adenosyl-L-methionine = N(4)-methylcytidine(1402) in 16S rRNA + S-adenosyl-L-homocysteine + H(+). Specifically methylates the N4 position of cytidine in position 1402 (C1402) of 16S rRNA. The protein is Ribosomal RNA small subunit methyltransferase H of Synechococcus sp. (strain CC9311).